The primary structure comprises 406 residues: 2,3-diketo-5-methylthiopentyl-1-phosphate enolase (406 aa).

Lysine 94 acts as the Proton acceptor in catalysis. Substrate contacts are provided by residues lysine 143, 169-172 (KDDE), histidine 260, glycine 332, and 354-355 (GG). The Mg(2+) site is built by lysine 169, aspartate 171, and glutamate 172. Lysine 169 is subject to N6-carboxylysine.

The protein belongs to the RuBisCO large chain family. Type IV subfamily. As to quaternary structure, homodimer. Requires Mg(2+) as cofactor.

It catalyses the reaction 5-methylsulfanyl-2,3-dioxopentyl phosphate = 2-hydroxy-5-methylsulfanyl-3-oxopent-1-enyl phosphate. It participates in amino-acid biosynthesis; L-methionine biosynthesis via salvage pathway; L-methionine from S-methyl-5-thio-alpha-D-ribose 1-phosphate: step 3/6. Catalyzes the enolization of 2,3-diketo-5-methylthiopentyl-1-phosphate (DK-MTP-1-P) into 2-hydroxy-3-keto-5-methylthiopentenyl-1-phosphate (HK-MTPenyl-1-P). This is 2,3-diketo-5-methylthiopentyl-1-phosphate enolase from Bacillus pumilus (strain SAFR-032).